The sequence spans 534 residues: Cytochrome P450 monooxygenase btcB (534 aa).

A glycan (N-linked (GlcNAc...) asparagine) is linked at asparagine 20. A helical membrane pass occupies residues 41–61 (ALAFLCGALLFGFVYSVFYNL). Asparagine 335, asparagine 413, and asparagine 431 each carry an N-linked (GlcNAc...) asparagine glycan. Cysteine 484 lines the heme pocket.

It belongs to the cytochrome P450 family. Requires heme as cofactor.

It localises to the membrane. It functions in the pathway secondary metabolite biosynthesis; terpenoid biosynthesis. Functionally, cytochrome P4590 monooxygenase part of the gene cluster that mediates the biosynthesis of betaestacins. The bifunctional terpene synthase btcA converts isopentenyl diphosphate (IPP) and dimethylallyl diphosphate (DMAPP) into the sesterterpene betaestacin I. The C-terminal prenyltransferase (PT) domain of btcA catalyzes formation of GFPP, whereas the N-terminal terpene cyclase (TC) domain catalyzes the cyclization of GFPP into betaestacin I. The cytochrome P450 monooxygenase btcB oxidizes the C25 methyl group of betaestacin I to yield the carboxylic acid betaestacin IV via the alcohol betaestacin III. The cytochrome P450 monooxygenase btcC further catalyzes the multistep oxidation of betaestacin IV to produce several compounds, including betaestacins Va, Vb, Vc and VI. This is Cytochrome P450 monooxygenase btcB from Colletotrichum orbiculare (strain 104-T / ATCC 96160 / CBS 514.97 / LARS 414 / MAFF 240422) (Cucumber anthracnose fungus).